The chain runs to 555 residues: Sulfite reductase [ferredoxin] 2 (555 aa).

Residues 1–31 (MTTARPAKARNEGQWALGNREPLNPNEEMKQ) form a disordered region. The segment at residues 69–161 (YTQREQGYDG…AVGLRTTEAC (93 aa)) is a cross-link (3'-(S-cysteinyl)-tyrosine (Tyr-Cys)). Residues cysteine 417, cysteine 423, cysteine 463, and cysteine 467 each coordinate [4Fe-4S] cluster. A siroheme-binding site is contributed by cysteine 467.

This sequence belongs to the nitrite and sulfite reductase 4Fe-4S domain family. In terms of assembly, monomer. Requires siroheme as cofactor. [4Fe-4S] cluster is required as a cofactor.

The enzyme catalyses hydrogen sulfide + 6 oxidized [2Fe-2S]-[ferredoxin] + 3 H2O = sulfite + 6 reduced [2Fe-2S]-[ferredoxin] + 7 H(+). Its function is as follows. Catalyzes the reduction of sulfite to sulfide, a step in the biosynthesis of sulfur-containing amino acids and cofactors. In Mycolicibacterium paratuberculosis (strain ATCC BAA-968 / K-10) (Mycobacterium paratuberculosis), this protein is Sulfite reductase [ferredoxin] 2 (sir2).